The primary structure comprises 315 residues: Cell division protein FtsZ (315 aa).

GTP-binding positions include Gly55–Gly57, Glu98, Arg102, and Asp146.

The protein belongs to the FtsZ family. As to quaternary structure, homodimer. Polymerizes to form a dynamic ring structure in a strictly GTP-dependent manner. Interacts directly with several other division proteins.

It is found in the cytoplasm. Functionally, essential cell division protein that forms a contractile ring structure (Z ring) at the future cell division site. The regulation of the ring assembly controls the timing and the location of cell division. One of the functions of the FtsZ ring is to recruit other cell division proteins to the septum to produce a new cell wall between the dividing cells. Binds GTP and shows GTPase activity. This Wolbachia pipientis protein is Cell division protein FtsZ.